The primary structure comprises 243 residues: 7-cyano-7-deazaguanine synthase (243 aa).

ATP is bound at residue F18–L28. Positions 206, 221, 224, and 227 each coordinate Zn(2+).

The protein belongs to the QueC family. Requires Zn(2+) as cofactor.

The enzyme catalyses 7-carboxy-7-deazaguanine + NH4(+) + ATP = 7-cyano-7-deazaguanine + ADP + phosphate + H2O + H(+). It participates in purine metabolism; 7-cyano-7-deazaguanine biosynthesis. Its function is as follows. Catalyzes the ATP-dependent conversion of 7-carboxy-7-deazaguanine (CDG) to 7-cyano-7-deazaguanine (preQ(0)). This Methylorubrum extorquens (strain PA1) (Methylobacterium extorquens) protein is 7-cyano-7-deazaguanine synthase.